Reading from the N-terminus, the 110-residue chain is Large ribosomal subunit protein uL22 (110 aa).

It belongs to the universal ribosomal protein uL22 family. As to quaternary structure, part of the 50S ribosomal subunit.

Functionally, this protein binds specifically to 23S rRNA; its binding is stimulated by other ribosomal proteins, e.g. L4, L17, and L20. It is important during the early stages of 50S assembly. It makes multiple contacts with different domains of the 23S rRNA in the assembled 50S subunit and ribosome. Its function is as follows. The globular domain of the protein is located near the polypeptide exit tunnel on the outside of the subunit, while an extended beta-hairpin is found that lines the wall of the exit tunnel in the center of the 70S ribosome. This chain is Large ribosomal subunit protein uL22, found in Shewanella baltica (strain OS223).